We begin with the raw amino-acid sequence, 151 residues long: MKAIIQRVKSSSVTVEGEVISEIKQGLMCLIGIGRDDTKEDAEYITRKILNLRLWKNEDGTKNWDRSVQQMDYEILFVSQFTLFAQLKGNKQSYHLAMAPELSKQFYLDFLENAKKSYKPEKIKDGRFGAMMDVQLINDGPVTIQLDSKEK.

Positions 140-141 match the Gly-cisPro motif, important for rejection of L-amino acids motif; it reads GP.

It belongs to the DTD family. Homodimer.

It is found in the cytoplasm. The catalysed reaction is glycyl-tRNA(Ala) + H2O = tRNA(Ala) + glycine + H(+). It catalyses the reaction a D-aminoacyl-tRNA + H2O = a tRNA + a D-alpha-amino acid + H(+). Its function is as follows. An aminoacyl-tRNA editing enzyme that deacylates mischarged D-aminoacyl-tRNAs. Also deacylates mischarged glycyl-tRNA(Ala), protecting cells against glycine mischarging by AlaRS. Acts via tRNA-based rather than protein-based catalysis; rejects L-amino acids rather than detecting D-amino acids in the active site. By recycling D-aminoacyl-tRNA to D-amino acids and free tRNA molecules, this enzyme counteracts the toxicity associated with the formation of D-aminoacyl-tRNA entities in vivo and helps enforce protein L-homochirality. The sequence is that of D-aminoacyl-tRNA deacylase (dtd) from Dictyostelium discoideum (Social amoeba).